A 185-amino-acid polypeptide reads, in one-letter code: Ribosome-recycling factor (185 aa).

Belongs to the RRF family.

It is found in the cytoplasm. Its function is as follows. Responsible for the release of ribosomes from messenger RNA at the termination of protein biosynthesis. May increase the efficiency of translation by recycling ribosomes from one round of translation to another. The protein is Ribosome-recycling factor of Clostridium acetobutylicum (strain ATCC 824 / DSM 792 / JCM 1419 / IAM 19013 / LMG 5710 / NBRC 13948 / NRRL B-527 / VKM B-1787 / 2291 / W).